We begin with the raw amino-acid sequence, 216 residues long: DNA repair and recombination protein RadB (216 aa).

Belongs to the eukaryotic RecA-like protein family. RadB subfamily.

Its function is as follows. Involved in DNA repair and in homologous recombination. May regulate the cleavage reactions of the branch-structured DNA. Has a very weak ATPase activity that is not stimulated by DNA. Binds DNA but does not promote DNA strands exchange. This is DNA repair and recombination protein RadB from Methanococcus maripaludis (strain C5 / ATCC BAA-1333).